Here is a 72-residue protein sequence, read N- to C-terminus: Translation initiation factor IF-1 (72 aa).

The S1-like domain maps to 1-72; sequence MAREDLIEVE…SRGRITYRKK (72 aa).

The protein belongs to the IF-1 family. As to quaternary structure, component of the 30S ribosomal translation pre-initiation complex which assembles on the 30S ribosome in the order IF-2 and IF-3, IF-1 and N-formylmethionyl-tRNA(fMet); mRNA recruitment can occur at any time during PIC assembly.

The protein localises to the cytoplasm. One of the essential components for the initiation of protein synthesis. Stabilizes the binding of IF-2 and IF-3 on the 30S subunit to which N-formylmethionyl-tRNA(fMet) subsequently binds. Helps modulate mRNA selection, yielding the 30S pre-initiation complex (PIC). Upon addition of the 50S ribosomal subunit IF-1, IF-2 and IF-3 are released leaving the mature 70S translation initiation complex. The sequence is that of Translation initiation factor IF-1 from Acholeplasma laidlawii (strain PG-8A).